The sequence spans 492 residues: Bifunctional protein GlmU (492 aa).

A pyrophosphorylase region spans residues 1–241; the sequence is MTFRGDTAVL…NALVAGVNNR (241 aa). Residues 12–15, K26, Q83, 88–89, 112–114, G151, E166, N181, and N239 contribute to the UDP-N-acetyl-alpha-D-glucosamine site; these read LAAG, GT, and SGD. D114 contacts Mg(2+). N239 is a Mg(2+) binding site. The interval 242 to 262 is linker; the sequence is VQLAELSAELNRRIVATHQVA. Residues 263–492 are N-acetyltransferase; it reads GVTIIDPATT…KQSQQKSEPD (230 aa). Residues R344 and K362 each contribute to the UDP-N-acetyl-alpha-D-glucosamine site. H374 serves as the catalytic Proton acceptor. Positions 377 and 388 each coordinate UDP-N-acetyl-alpha-D-glucosamine. Acetyl-CoA is bound by residues A391, 397–398, S416, and A434; that span reads NY. The segment at 461 to 492 is disordered; that stretch reads VQRKRPGSAAAQAAEKASTRTGKQSQQKSEPD. The span at 479–492 shows a compositional bias: polar residues; the sequence is TRTGKQSQQKSEPD.

This sequence in the N-terminal section; belongs to the N-acetylglucosamine-1-phosphate uridyltransferase family. In the C-terminal section; belongs to the transferase hexapeptide repeat family. In terms of assembly, homotrimer. It depends on Mg(2+) as a cofactor.

The protein localises to the cytoplasm. The catalysed reaction is alpha-D-glucosamine 1-phosphate + acetyl-CoA = N-acetyl-alpha-D-glucosamine 1-phosphate + CoA + H(+). The enzyme catalyses N-acetyl-alpha-D-glucosamine 1-phosphate + UTP + H(+) = UDP-N-acetyl-alpha-D-glucosamine + diphosphate. It participates in nucleotide-sugar biosynthesis; UDP-N-acetyl-alpha-D-glucosamine biosynthesis; N-acetyl-alpha-D-glucosamine 1-phosphate from alpha-D-glucosamine 6-phosphate (route II): step 2/2. The protein operates within nucleotide-sugar biosynthesis; UDP-N-acetyl-alpha-D-glucosamine biosynthesis; UDP-N-acetyl-alpha-D-glucosamine from N-acetyl-alpha-D-glucosamine 1-phosphate: step 1/1. It functions in the pathway bacterial outer membrane biogenesis; LPS lipid A biosynthesis. Catalyzes the last two sequential reactions in the de novo biosynthetic pathway for UDP-N-acetylglucosamine (UDP-GlcNAc). The C-terminal domain catalyzes the transfer of acetyl group from acetyl coenzyme A to glucosamine-1-phosphate (GlcN-1-P) to produce N-acetylglucosamine-1-phosphate (GlcNAc-1-P), which is converted into UDP-GlcNAc by the transfer of uridine 5-monophosphate (from uridine 5-triphosphate), a reaction catalyzed by the N-terminal domain. The protein is Bifunctional protein GlmU of Mycobacterium leprae (strain Br4923).